A 49-amino-acid polypeptide reads, in one-letter code: Large ribosomal subunit protein bL33B (49 aa).

The protein belongs to the bacterial ribosomal protein bL33 family.

In terms of biological role, plays a role in sporulation at high temperatures. The chain is Large ribosomal subunit protein bL33B (rpmGB) from Bacillus subtilis (strain 168).